The primary structure comprises 159 residues: Neuroglobin (159 aa).

The Globin domain occupies 3 to 151 (KLSEKDKELI…VVAAMSQGWA (149 aa)). Heme b is bound by residues H66 and H98.

It belongs to the globin family. As to quaternary structure, monomer. Homodimers and homotetramers. Mainly monomeric but also detected as part of homodimers and homotetramers.

The protein localises to the cytoplasm. It localises to the cytosol. The protein resides in the mitochondrion matrix. The catalysed reaction is Fe(III)-heme b-[protein] + nitric oxide + H2O = Fe(II)-heme b-[protein] + nitrite + 2 H(+). In terms of biological role, monomeric globin with a bis-histidyl six-coordinate heme-iron atom through which it can bind dioxygen, carbon monoxide and nitric oxide. Could help transport oxygen and increase its availability to the metabolically active neuronal tissues, though its low quantity in tissues as well as its high affinity for dioxygen, which may limit its oxygen-releasing ability, argue against it. The ferrous/deoxygenated form exhibits a nitrite reductase activity and it could produce nitric oxide which in turn inhibits cellular respiration in response to hypoxia. In its ferrous/deoxygenated state, it may also exhibit GDI (Guanine nucleotide Dissociation Inhibitor) activity toward heterotrimeric G-alpha proteins, thereby regulating signal transduction to facilitate neuroprotective responses in the wake of hypoxia and associated oxidative stress. The chain is Neuroglobin (ngb) from Chaenocephalus aceratus (Blackfin icefish).